The primary structure comprises 564 residues: Probable cysteine--tRNA ligase, mitochondrial (564 aa).

Residue Cys-78 participates in Zn(2+) binding. Gly-79 provides a ligand contact to L-cysteine. The 'HIGH' region motif lies at 80-90; the sequence is PTVYDHAHLGH. Residue Thr-119 coordinates L-cysteine. A 'KIIK' region motif is present at residues 124–127; sequence KIIK. Positions 257, 282, and 286 each coordinate Zn(2+). His-282 serves as a coordination point for L-cysteine. The 'KMSKS' region signature appears at 317 to 321; it reads KMSKS. Lys-320 provides a ligand contact to ATP.

The protein belongs to the class-I aminoacyl-tRNA synthetase family. Zn(2+) is required as a cofactor.

It localises to the mitochondrion. It carries out the reaction tRNA(Cys) + L-cysteine + ATP = L-cysteinyl-tRNA(Cys) + AMP + diphosphate. It catalyses the reaction 2 L-cysteine = S-sulfanyl-L-cysteine + L-alanine. The enzyme catalyses S-sulfanyl-L-cysteine + L-cysteine = S-disulfanyl-L-cysteine + L-alanine. The catalysed reaction is S-sulfanyl-L-cysteine + tRNA(Cys) + ATP = (S)-sulfanyl-L-cysteinyl-tRNA(Cys) + AMP + diphosphate. It carries out the reaction S-disulfanyl-L-cysteine + tRNA(Cys) + ATP = (S)-disulfanyl-L-cysteinyl-tRNA(Cys) + AMP + diphosphate. Its function is as follows. Mitochondrial cysteine-specific aminoacyl-tRNA synthetase that catalyzes the ATP-dependent ligation of cysteine to tRNA(Cys). Functionally, in addition to its role as an aminoacyl-tRNA synthetase, has also cysteine persulfide synthase activity. Produces reactive persulfide species such as cysteine persulfide (CysSSH) from substrate cysteine and mediate direct incorporation of CysSSH into proteins during translations, resulting in protein persulfides and polysulfides. CysSSHs behave as potent antioxidants and cellular protectants. The sequence is that of Probable cysteine--tRNA ligase, mitochondrial from Homo sapiens (Human).